A 189-amino-acid chain; its full sequence is Nucleolar protein 16 (189 aa).

Positions 1-33 (MARDVKKRGKPAYTNRRNRQKYLKKKDNKKKLS) are enriched in basic residues. Residues 1–34 (MARDVKKRGKPAYTNRRNRQKYLKKKDNKKKLSK) are disordered.

Belongs to the NOP16 family.

It is found in the nucleus. Its subcellular location is the nucleolus. This is Nucleolar protein 16 from Caenorhabditis elegans.